The chain runs to 92 residues: Elongation factor 1-beta (92 aa).

It belongs to the EF-1-beta/EF-1-delta family.

Its function is as follows. Promotes the exchange of GDP for GTP in EF-1-alpha/GDP, thus allowing the regeneration of EF-1-alpha/GTP that could then be used to form the ternary complex EF-1-alpha/GTP/AAtRNA. This Korarchaeum cryptofilum (strain OPF8) protein is Elongation factor 1-beta.